A 1004-amino-acid polypeptide reads, in one-letter code: Outer cell wall protein (1004 aa).

A signal peptide spans 1 to 24; it reads MNKKVVLSVLSTTLVASVAASAFA.

As to quaternary structure, the outer cell wall layer is composed of subunits of the outer cell wall protein. These proteins form a hexagonal array with a lattice constant of 14.5 nm in the outer cell wall layers.

It is found in the secreted. Its subcellular location is the cell wall. The protein localises to the S-layer. Functionally, the outer wall protein binds to the middle cell wall protein. The sequence is that of Outer cell wall protein from Brevibacillus brevis (strain 47 / JCM 6285 / NBRC 100599).